Consider the following 630-residue polypeptide: DNA mismatch repair protein MutL (630 aa).

It belongs to the DNA mismatch repair MutL/HexB family.

Its function is as follows. This protein is involved in the repair of mismatches in DNA. It is required for dam-dependent methyl-directed DNA mismatch repair. May act as a 'molecular matchmaker', a protein that promotes the formation of a stable complex between two or more DNA-binding proteins in an ATP-dependent manner without itself being part of a final effector complex. This is DNA mismatch repair protein MutL from Lactobacillus johnsonii (strain CNCM I-12250 / La1 / NCC 533).